A 76-amino-acid polypeptide reads, in one-letter code: Beta-defensin 121 (76 aa).

The first 15 residues, 1–15 (MKLLLLLLTVTLLLA), serve as a signal peptide directing secretion. 3 cysteine pairs are disulfide-bonded: Cys23/Cys50, Cys30/Cys44, and Cys34/Cys51.

It belongs to the beta-defensin family. As to expression, abundant expression in the male reproductive tract only.

The protein resides in the secreted. Has antibacterial activity. In Macaca mulatta (Rhesus macaque), this protein is Beta-defensin 121 (DEFB121).